A 235-amino-acid polypeptide reads, in one-letter code: Small ribosomal subunit protein uS3 (235 aa).

One can recognise a KH type-2 domain in the interval 39 to 107; that stretch reads VRLFLRKELF…PTQINIAEIR (69 aa).

It belongs to the universal ribosomal protein uS3 family. Part of the 30S ribosomal subunit. Forms a tight complex with proteins S10 and S14.

Its function is as follows. Binds the lower part of the 30S subunit head. Binds mRNA in the 70S ribosome, positioning it for translation. In Buchnera aphidicola subsp. Baizongia pistaciae (strain Bp), this protein is Small ribosomal subunit protein uS3.